Reading from the N-terminus, the 200-residue chain is Recombination protein RecR (200 aa).

Residues 59 to 74 (CEVCGNVCESSPCTIC) form a C4-type zinc finger. Residues 82-177 (GTICVVEEPK…KVTRLASGLP (96 aa)) form the Toprim domain.

Belongs to the RecR family.

May play a role in DNA repair. It seems to be involved in an RecBC-independent recombinational process of DNA repair. It may act with RecF and RecO. The sequence is that of Recombination protein RecR from Bifidobacterium animalis subsp. lactis (strain AD011).